Reading from the N-terminus, the 357-residue chain is Biotin synthase (357 aa).

One can recognise a Radical SAM core domain in the interval 41 to 268 (NEVQISRLLS…KSRVRLSAGR (228 aa)). [4Fe-4S] cluster-binding residues include Cys-56, Cys-60, and Cys-63. [2Fe-2S] cluster-binding residues include Cys-100, Cys-131, Cys-191, and Arg-263.

Belongs to the radical SAM superfamily. Biotin synthase family. In terms of assembly, homodimer. It depends on [4Fe-4S] cluster as a cofactor. [2Fe-2S] cluster is required as a cofactor.

It carries out the reaction (4R,5S)-dethiobiotin + (sulfur carrier)-SH + 2 reduced [2Fe-2S]-[ferredoxin] + 2 S-adenosyl-L-methionine = (sulfur carrier)-H + biotin + 2 5'-deoxyadenosine + 2 L-methionine + 2 oxidized [2Fe-2S]-[ferredoxin]. The protein operates within cofactor biosynthesis; biotin biosynthesis; biotin from 7,8-diaminononanoate: step 2/2. Functionally, catalyzes the conversion of dethiobiotin (DTB) to biotin by the insertion of a sulfur atom into dethiobiotin via a radical-based mechanism. The polypeptide is Biotin synthase (Shewanella denitrificans (strain OS217 / ATCC BAA-1090 / DSM 15013)).